The following is a 578-amino-acid chain: Arginine--tRNA ligase (578 aa).

Residues Pro122–His132 carry the 'HIGH' region motif.

This sequence belongs to the class-I aminoacyl-tRNA synthetase family. In terms of assembly, monomer.

The protein resides in the cytoplasm. The enzyme catalyses tRNA(Arg) + L-arginine + ATP = L-arginyl-tRNA(Arg) + AMP + diphosphate. The polypeptide is Arginine--tRNA ligase (Shigella sonnei (strain Ss046)).